The following is a 454-amino-acid chain: MARLFGTDGVRGLANVDLTADMALGLAVAAASVLVEPGGNAHPRALVARDPRASGEFLSAAVVAGLASAGVDVLDIGVVPTPALAHLVDTSGADFGVMLSASHNPMPDNGLKIFARGGTKLPDDVEDVVERAYREGGGRRPTGAAVGRVHGGPDVEQDAQDTYVAHLLSTLPGGPGSLKGLHVVVDCANGAASAVSPRVLAEAGARVTTIFAAPDGLNINDGCGSTHLGPVTAAVLAHGADIGLAHDGDADRCLAVDARGNAVDGDQIMAVLTLALRDRGQLTDDTLVATVMSNLGLRLAMQREGVTMVETGVGDRYVLEALNAGGWSIGGEQSGHVVLPAHATTGDGVLTGLHLLARMAETGRSLEDLTGVVQRLPQVLVNVRGVDKSRAGSDAELLGAVADAERELGETGRVLLRPSGTEPLVRVMVEAAHTDHAQGVADRLADVVRKRLAL.

Serine 102 functions as the Phosphoserine intermediate in the catalytic mechanism. 4 residues coordinate Mg(2+): serine 102, aspartate 247, aspartate 249, and aspartate 251. Phosphoserine is present on serine 102.

This sequence belongs to the phosphohexose mutase family. Mg(2+) is required as a cofactor. Activated by phosphorylation.

It catalyses the reaction alpha-D-glucosamine 1-phosphate = D-glucosamine 6-phosphate. In terms of biological role, catalyzes the conversion of glucosamine-6-phosphate to glucosamine-1-phosphate. In Kineococcus radiotolerans (strain ATCC BAA-149 / DSM 14245 / SRS30216), this protein is Phosphoglucosamine mutase.